Consider the following 772-residue polypeptide: Angiomotin-like protein 2 (772 aa).

Disordered stretches follow at residues 41–158 (GGAG…HVRS), 170–239 (RNGA…SPHF), and 260–299 (QYQY…PSAQ). Basic and acidic residues-rich tracts occupy residues 80–91 (QGGETHLAENRL), 100–112 (KGEE…EAKA), and 142–153 (RRQDEALRELRH). A required for interaction with CDH5 region spans residues 101–303 (GEELPTYEEA…GPPSAQATLG (203 aa)). Tyr-107 carries the phosphotyrosine; by FGFR1 modification. Over residues 178–191 (HMSSSHSFPQLARS) the composition is skewed to polar residues. Pro residues predominate over residues 197–214 (PRGPPAEGPEPRGPPPQY). Residues 221 to 303 (QETAAVTDPR…GPPSAQATLG (83 aa)) are required for interaction with CDH1. The stretch at 305–578 (AHLAQMETVL…KYLEERAMRQ (274 aa)) forms a coiled coil. Residues Lys-343 and Lys-404 each participate in a glycyl lysine isopeptide (Lys-Gly) (interchain with G-Cter in ubiquitin) cross-link. Disordered regions lie at residues 596–615 (IRHS…LLPG) and 680–752 (GLVS…RTPS). Basic and acidic residues predominate over residues 686-699 (RQTDARPAGDRVPA). The segment covering 718-733 (DGSTQTDGPADNTSAC) has biased composition (polar residues). Phosphoserine occurs at positions 752 and 755. Residues 769-772 (EILI) carry the PDZ-binding motif.

It belongs to the angiomotin family. In terms of assembly, part of a complex composed of AMOTL2, MAGI1 and CDH5, within the complex AMOTL2 acts as a scaffold protein for the interaction of MAGI1 with CDH5. The complex is required for coupling actin fibers to cell junctions in endothelial cells. Within the complex AMOTL2 (via its N-terminus) interacts with CDH5. Interacts (via N-terminus) with MAGI1. Interacts (via N-terminus) with ACTB; the interaction facilitates binding of cell junction complexes to actin fibers in endothelial cells. Interacts with CDH1; the interaction may facilitate binding of radial actin fibers to cell junction complexes. Interacts with SRC. Interacts with YAP1; the interaction is required for ubiquitination of AMOTL2 and localization of YAP1 to tight junctions. Interacts with WWP1; the interaction facilitates WWP1 interaction with the Crumbs complex and subsequent WWP1 translocation to the plasma membrane. WWP1 interaction with the Crumbs complex promotes WWP1 monoubiquitination of AMOTL2 which subsequently activates the Hippo signaling pathway. When ubiquitinated interacts with LATS2 (via UBA domain); the interaction promotes LATS2 phosphorylation of YAP1. Interacts (via PPXY motif) with WWTR1/TAZ (via WW domain); the interaction promotes WWTR1/TAZ localization to the cytoplasm and thereby inhibition of its transcriptional properties. Interacts with PHLDB2; interaction may facilitate PHLDB2 localization to the myotube podosome cortex that surrounds the core. Phosphorylation at Tyr-107 is necessary for efficient binding to SRC and synergistically functioning with SRC to activate the downstream MAPK pathway. Post-translationally, monoubiquitinated at Lys-343 and Lys-404 by Crumbs complex-bound WWP1. De-ubiquitinated at Lys-343 and Lys-404 by USP9X; the interaction may be promoted by cell contact inhibition. Deubiquitination of AMOTL2 negatively regulates Hippo signaling activation. Expressed in skeletal muscle at neuromuscular junctions (at protein level).

The protein resides in the recycling endosome. It is found in the cytoplasm. The protein localises to the cell projection. It localises to the podosome. Its subcellular location is the cell junction. Regulates the translocation of phosphorylated SRC to peripheral cell-matrix adhesion sites. Required for proper architecture of actin filaments. Plays a role in coupling actin fibers to cell junctions in endothelial cells and is therefore required for correct endothelial cell morphology via facilitating transcellular transmission of mechanical force resulting in endothelial cell elongation. Required for the anchoring of radial actin fibers to CDH1 junction complexes at the cell membrane which facilitates organization of radial actin fiber structure and cellular response to contractile forces. This contributes to maintenance of cell area, size, shape, epithelial sheet organization and trophectoderm cell properties that facilitate blastocyst zona hatching. Inhibits the Wnt/beta-catenin signaling pathway, probably by recruiting CTNNB1 to recycling endosomes and hence preventing its translocation to the nucleus. Participates in angiogenesis. Activates the Hippo signaling pathway in response to cell contact inhibition via interaction with and ubiquitination by Crumbs complex-bound WWP1. Ubiquitinated AMOTL2 then interacts with LATS2 which in turn phosphorylates YAP1, excluding it from the nucleus and localizing it to the cytoplasm and tight junctions, therefore ultimately repressing YAP1-driven transcription of target genes. Acts to inhibit WWTR1/TAZ transcriptional coactivator activity via sequestering WWTR1/TAZ in the cytoplasm and at tight junctions. Regulates the size and protein composition of the podosome cortex and core at myofibril neuromuscular junctions. Selectively promotes FGF-induced MAPK activation through SRC. May play a role in the polarity, proliferation and migration of endothelial cells. This chain is Angiomotin-like protein 2, found in Mus musculus (Mouse).